A 40-amino-acid polypeptide reads, in one-letter code: Mastoparan-like peptide 12c (40 aa).

The signal sequence occupies residues 1-7; it reads MSAEALA. The segment at 1-22 is disordered; that stretch reads MSAEALADPKADPLAGPNPDAD. 4 AXPX repeats span residues 7-10, 11-14, 15-18, and 19-22; these read ADPK, ADPL, AGPN, and PDAD. A propeptide spanning residues 8-25 is cleaved from the precursor; it reads DPKADPLAGPNPDADPEA. Residue Leu-39 is modified to Leucine amide.

The protein belongs to the MCD family. Mastoparan subfamily. In terms of tissue distribution, expressed by the venom gland.

The protein localises to the secreted. Shows mast cell degranulation and antimicrobial activities against the Gram-negative bacteria E.coli ATCC 25922 (MIC=6.0 ug/ml), the Gram-positive bacteria S.aureus ATCC 2592 (MIC=3.0 ug/ml) and the fungus C.albicans ATCC 2002 (MIC=12 ug/ml). Exhibits little hemolytic activity against washed human erythrocytes. Its mast cell degranulation activity may be related to the activation of G-protein coupled receptors in mast cells as well as interaction with other proteins located in cell endosomal membranes in the mast cells. This Vespa magnifica (Hornet) protein is Mastoparan-like peptide 12c.